The primary structure comprises 192 residues: uncharacterized protein (192 aa).

The region spanning 29-160 (QRQAAVLIPV…PLDVYRRGNS (132 aa)) is the Nudix hydrolase domain. Residues 67-89 (GAVDSTDASLIAAALREAQEEVA) carry the Nudix box motif. The Mg(2+) site is built by E83 and E87.

The protein belongs to the Nudix hydrolase family. PCD1 subfamily. Requires Mn(2+) as cofactor. The cofactor is Mg(2+).

In terms of biological role, probably mediates the hydrolysis of some nucleoside diphosphate derivatives. This is an uncharacterized protein from Salmonella newport (strain SL254).